Consider the following 168-residue polypeptide: MKKFFTVAILAGSVLSTAHGSLLNLKAMVEAVTGRSAILSFVGYGCYCGLGGRGQPKDEVDWCCHAHDCCYQELFDQGCHPYVDHYDHTIENNTEIVCSDLNKTECDKQTCMCDKNMVLCLMNQTYREEYRGFLNVYCQGPTPNCSIYEPPPEEVTCSHQSPAPPAPP.

Residues 1-20 (MKKFFTVAILAGSVLSTAHG) form the signal peptide. Disulfide bonds link Cys-46-Cys-138, Cys-48-Cys-64, Cys-63-Cys-120, Cys-69-Cys-145, Cys-70-Cys-113, Cys-79-Cys-106, and Cys-98-Cys-111. Residues Tyr-47, Gly-49, and Gly-51 each contribute to the Ca(2+) site. His-67 is an active-site residue. Residue Asp-68 participates in Ca(2+) binding. 2 N-linked (GlcNAc...) asparagine glycosylation sites follow: Asn-92 and Asn-102. The active site involves Asp-114. Asn-123 and Asn-144 each carry an N-linked (GlcNAc...) asparagine glycan. The tract at residues 139–168 (QGPTPNCSIYEPPPEEVTCSHQSPAPPAPP) is required for localization on the plasma membrane.

This sequence belongs to the phospholipase A2 family. Ca(2+) serves as cofactor. As to expression, expressed at high levels in placenta, testis, thymus and at lower levels in heart, kidney, liver and prostate. Highly expressed in rheumatoid arthritic tissues, including synovial lining cells in the intima, capillary endothelial cells and plasma cells.

It is found in the secreted. The protein resides in the cell membrane. The catalysed reaction is a 1,2-diacyl-sn-glycero-3-phosphocholine + H2O = a 1-acyl-sn-glycero-3-phosphocholine + a fatty acid + H(+). It carries out the reaction 1-hexadecanoyl-2-(9Z-octadecenoyl)-sn-glycero-3-phospho-(1'-sn-glycerol) + H2O = 1-hexadecanoyl-sn-glycero-3-phospho-(1'-sn-glycerol) + (9Z)-octadecenoate + H(+). It catalyses the reaction 1-hexadecanoyl-2-(9Z,12Z-octadecadienoyl)-sn-glycero-3-phosphoethanolamine + H2O = 1-hexadecanoyl-sn-glycero-3-phosphoethanolamine + (9Z,12Z)-octadecadienoate + H(+). The enzyme catalyses 1-hexadecanoyl-2-(5Z,8Z,11Z,14Z-eicosatetraenoyl)-sn-glycero-3-phosphoethanolamine + H2O = 1-hexadecanoyl-sn-glycero-3-phosphoethanolamine + (5Z,8Z,11Z,14Z)-eicosatetraenoate + H(+). The catalysed reaction is 1-hexadecanoyl-2-(9Z-octadecenoyl)-sn-glycero-3-phosphocholine + H2O = 1-hexadecanoyl-sn-glycero-3-phosphocholine + (9Z)-octadecenoate + H(+). It carries out the reaction 1-hexadecanoyl-2-(9Z-octadecenoyl)-sn-glycero-3-phospho-L-serine + H2O = 1-hexadecanoyl-sn-glycero-3-phospho-L-serine + (9Z)-octadecenoate + H(+). Secretory calcium-dependent phospholipase A2 that primarily targets extracellular phospholipids. Hydrolyzes the ester bond of the fatty acyl group attached at the sn-2 position of phospholipids (phospholipase A2 activity), the catalytic efficiency decreasing in the following order: phosphatidylglycerols &gt; phosphatidylethanolamines &gt; phosphatidylcholines &gt; phosphatidylserines. May play a role in lipid mediator production in inflammatory conditions, by providing arachidonic acid to downstream cyclooxygenases and lipoxygenases. The polypeptide is Group IIF secretory phospholipase A2 (PLA2G2F) (Homo sapiens (Human)).